We begin with the raw amino-acid sequence, 151 residues long: Ribosome maturation factor RimP (151 aa).

This sequence belongs to the RimP family.

Its subcellular location is the cytoplasm. Its function is as follows. Required for maturation of 30S ribosomal subunits. This is Ribosome maturation factor RimP from Vibrio vulnificus (strain CMCP6).